The sequence spans 423 residues: F-box/LRR-repeat protein 2 (423 aa).

The region spanning 9-55 (GLINKKLPKELLLRIFSFLDIVTLCRCAQISKAWNILALDGSNWQRV) is the F-box domain. 13 LRR repeats span residues 61 to 87 (QTDVEGRVVENISKRCGGFLRKLSLRG), 88 to 113 (CIGVGDSSLKTFAQNCRNIEHLNLNG), 114 to 139 (CTKITDSTCYSLSRFCSKLKHLDLTS), 140 to 165 (CVSVTNSSLKGISEGCRNLEYLNLSW), 166 to 191 (CDQITKEGIEALVRGCRGLKALLLRG), 192 to 217 (CTQLEDEALKHIQNHCHELVSLNLQS), 218 to 243 (CSRITDDGVVQICRGCHRLQALCLSG), 244 to 269 (CSNLTDASLTALGLNCPRLQVLEAAR), 270 to 295 (CSHLTDAGFTLLARNCHELEKMDLEE), 296 to 321 (CVLITDSTLVQLSIHCPKLQALSLSH), 322 to 350 (CELITDEGILHLSSSTCGHERLRVLELDN), 351 to 375 (CLLVTDASLEHLENCRGLERLELYD), and 376 to 401 (CQQVTRAGIKRMRAQLPHVKVHAYFA). An interaction with Calmodulin region spans residues 80–90 (LRKLSLRGCIG). A Glycyl lysine isopeptide (Lys-Gly) (interchain with G-Cter in ubiquitin) cross-link involves residue Lys201. Thr404 carries the post-translational modification Phosphothreonine; by GSK3-beta. Cys420 is lipidated: S-geranylgeranyl cysteine. Positions 420–423 (CVIL) match the CAAX motif motif.

Part of the SCF (SKP1-CUL1-F-box) E3 ubiquitin-protein ligase complex SCF(FBXL2) composed of CUL1, SKP1, RBX1 and FBXL2. Interacts with calmodulin; may antagonize substrate ubiquitination by SCF(FBXL2). May interact with PIK3R1. Interacts with PTPN13. Phosphorylated by GSK-beta (GSK3B), promoting recognition by FBXO3, leading to its ubiquitination by the SCF(FBXO3) complex. Post-translationally, ubiquitinated at Lys-201 by the SCF(FBXO3) complex in response to lipopolysaccharide (LPS), leading to its degradation by the proteasome.

It localises to the membrane. The protein operates within protein modification; protein ubiquitination. Its function is as follows. Calcium-activated substrate recognition component of the SCF (SKP1-cullin-F-box protein) E3 ubiquitin-protein ligase complex, SCF(FBXL2), which mediates the ubiquitination and subsequent proteasomal degradation of target proteins. Unlike many F-box proteins, FBXL2 does not seem to target phosphodegron within its substrates but rather calmodulin-binding motifs and is thereby antagonized by calmodulin. This is the case for the cyclins CCND2 and CCND3 which polyubiquitination and subsequent degradation are inhibited by calmodulin. Through CCND2 and CCND3 degradation induces cell-cycle arrest in G(0). SCF(FBXL2) also mediates PIK3R2 ubiquitination and proteasomal degradation thereby regulating phosphatidylinositol 3-kinase signaling and autophagy. PCYT1A monoubiquitination by SCF(FBXL2) and subsequent degradation regulates synthesis of phosphatidylcholine, which is utilized for formation of membranes and of pulmonary surfactant. The SCF(FBXL2) complex acts as a regulator of inflammation by mediating ubiquitination and degradation of TRAF proteins (TRAF1, TRAF2, TRAF3, TRAF4, TRAF5 and TRAF6). The SCF(FBXL2) complex acts as a negative regulator of the NLRP3 inflammasome by mediating ubiquitination and degradation of NLRP3. This chain is F-box/LRR-repeat protein 2, found in Mus musculus (Mouse).